A 234-amino-acid chain; its full sequence is Leucyl/phenylalanyl-tRNA--protein transferase (234 aa).

This sequence belongs to the L/F-transferase family.

Its subcellular location is the cytoplasm. It carries out the reaction N-terminal L-lysyl-[protein] + L-leucyl-tRNA(Leu) = N-terminal L-leucyl-L-lysyl-[protein] + tRNA(Leu) + H(+). The enzyme catalyses N-terminal L-arginyl-[protein] + L-leucyl-tRNA(Leu) = N-terminal L-leucyl-L-arginyl-[protein] + tRNA(Leu) + H(+). It catalyses the reaction L-phenylalanyl-tRNA(Phe) + an N-terminal L-alpha-aminoacyl-[protein] = an N-terminal L-phenylalanyl-L-alpha-aminoacyl-[protein] + tRNA(Phe). Functionally, functions in the N-end rule pathway of protein degradation where it conjugates Leu, Phe and, less efficiently, Met from aminoacyl-tRNAs to the N-termini of proteins containing an N-terminal arginine or lysine. The sequence is that of Leucyl/phenylalanyl-tRNA--protein transferase from Salmonella arizonae (strain ATCC BAA-731 / CDC346-86 / RSK2980).